The following is a 196-amino-acid chain: ATP-dependent Clp protease proteolytic subunit (196 aa).

Ser-101 serves as the catalytic Nucleophile. Residue His-126 is part of the active site.

It belongs to the peptidase S14 family. Component of the chloroplastic Clp protease core complex.

The protein localises to the plastid. Its subcellular location is the chloroplast stroma. It carries out the reaction Hydrolysis of proteins to small peptides in the presence of ATP and magnesium. alpha-casein is the usual test substrate. In the absence of ATP, only oligopeptides shorter than five residues are hydrolyzed (such as succinyl-Leu-Tyr-|-NHMec, and Leu-Tyr-Leu-|-Tyr-Trp, in which cleavage of the -Tyr-|-Leu- and -Tyr-|-Trp bonds also occurs).. In terms of biological role, cleaves peptides in various proteins in a process that requires ATP hydrolysis. Has a chymotrypsin-like activity. Plays a major role in the degradation of misfolded proteins. This Atropa belladonna (Belladonna) protein is ATP-dependent Clp protease proteolytic subunit.